A 406-amino-acid polypeptide reads, in one-letter code: L-methionine gamma-lyase (406 aa).

Residues 76 to 78 (YQR) and 106 to 107 (GM) each bind pyridoxal 5'-phosphate. Tyr-132 contributes to the L-homocysteine binding site. Pyridoxal 5'-phosphate is bound at residue 219 to 221 (SAT). Lys-222 carries the N6-(pyridoxal phosphate)lysine modification. Residue Arg-380 participates in L-homocysteine binding. Arg-380 provides a ligand contact to L-methionine.

It belongs to the trans-sulfuration enzymes family. L-methionine gamma-lyase subfamily. Homotetramer. Requires pyridoxal 5'-phosphate as cofactor.

It catalyses the reaction L-methionine + H2O = methanethiol + 2-oxobutanoate + NH4(+). The catalysed reaction is L-homocysteine + H2O = 2-oxobutanoate + hydrogen sulfide + NH4(+) + H(+). Its activity is regulated as follows. Is inhibited in vitro by carbonyl reagents, completely inactivated by DL-propargylglycine, and unaffected by metal-chelating agents. In terms of biological role, catalyzes the alpha,gamma-elimination of L-methionine to produce methanethiol, 2-oxobutanoate and ammonia. May be responsible for the production of methanethiol associated with desirable Cheddar-type sulfur notes during cheese ripening. Is also able to catalyze the alpha,gamma-elimination of L-homocysteine and DL-selenomethionine, but has no activity toward L-cysteine, L-cystathionine, S-adenosyl-L-homocysteine and D-methionine. This chain is L-methionine gamma-lyase, found in Brevibacterium aurantiacum.